The primary structure comprises 120 residues: Ribonuclease P protein component 4 (120 aa).

Residues Cys68, Cys71, Cys97, and Cys100 each coordinate Zn(2+).

The protein belongs to the eukaryotic/archaeal RNase P protein component 4 family. In terms of assembly, consists of a catalytic RNA component and at least 5 protein subunits. Forms a heterodimeric subcomplex with Rnp1. Reconstituted enzyme missing individual protein subunits is suboptimally active, showing each subunit contributes to optimization of activity. It depends on Zn(2+) as a cofactor.

Its subcellular location is the cytoplasm. The enzyme catalyses Endonucleolytic cleavage of RNA, removing 5'-extranucleotides from tRNA precursor.. Functionally, part of ribonuclease P, a protein complex that generates mature tRNA molecules by cleaving their 5'-ends. Binds RNase P RNA. This Pyrococcus horikoshii (strain ATCC 700860 / DSM 12428 / JCM 9974 / NBRC 100139 / OT-3) protein is Ribonuclease P protein component 4.